A 179-amino-acid polypeptide reads, in one-letter code: Large ribosomal subunit protein uL5 (179 aa).

The protein belongs to the universal ribosomal protein uL5 family. As to quaternary structure, part of the 50S ribosomal subunit; part of the 5S rRNA/L5/L18/L25 subcomplex. Contacts the 5S rRNA and the P site tRNA. Forms a bridge to the 30S subunit in the 70S ribosome.

Functionally, this is one of the proteins that bind and probably mediate the attachment of the 5S RNA into the large ribosomal subunit, where it forms part of the central protuberance. In the 70S ribosome it contacts protein S13 of the 30S subunit (bridge B1b), connecting the 2 subunits; this bridge is implicated in subunit movement. Contacts the P site tRNA; the 5S rRNA and some of its associated proteins might help stabilize positioning of ribosome-bound tRNAs. The chain is Large ribosomal subunit protein uL5 from Geotalea uraniireducens (strain Rf4) (Geobacter uraniireducens).